The following is a 355-amino-acid chain: Peptide chain release factor 1 (355 aa).

An N5-methylglutamine modification is found at Gln230.

It belongs to the prokaryotic/mitochondrial release factor family. Post-translationally, methylated by PrmC. Methylation increases the termination efficiency of RF1.

The protein resides in the cytoplasm. Peptide chain release factor 1 directs the termination of translation in response to the peptide chain termination codons UAG and UAA. The protein is Peptide chain release factor 1 of Geotalea uraniireducens (strain Rf4) (Geobacter uraniireducens).